The sequence spans 151 residues: Small ribosomal subunit protein uS15 (151 aa).

Lys27 bears the N6-acetyllysine; alternate mark. Lys27 bears the N6-succinyllysine; alternate mark. Residue Lys27 forms a Glycyl lysine isopeptide (Lys-Gly) (interchain with G-Cter in ubiquitin) linkage. Ser30 bears the Phosphoserine mark. Lys34 bears the N6-succinyllysine mark. The residue at position 38 (Tyr38) is a Phosphotyrosine. Lys43 is covalently cross-linked (Glycyl lysine isopeptide (Lys-Gly) (interchain with G-Cter in SUMO2)).

The protein belongs to the universal ribosomal protein uS15 family. As to quaternary structure, component of the small ribosomal subunit. Part of the small subunit (SSU) processome, composed of more than 70 proteins and the RNA chaperone small nucleolar RNA (snoRNA) U3. In terms of processing, ubiquitinated at Lys-27 by RNF14 and RNF25 in response to ribosome collisions (ribosome stalling).

The protein resides in the cytoplasm. It is found in the nucleus. Its subcellular location is the nucleolus. Its function is as follows. Component of the small ribosomal subunit. The ribosome is a large ribonucleoprotein complex responsible for the synthesis of proteins in the cell. Part of the small subunit (SSU) processome, first precursor of the small eukaryotic ribosomal subunit. During the assembly of the SSU processome in the nucleolus, many ribosome biogenesis factors, an RNA chaperone and ribosomal proteins associate with the nascent pre-rRNA and work in concert to generate RNA folding, modifications, rearrangements and cleavage as well as targeted degradation of pre-ribosomal RNA by the RNA exosome. The polypeptide is Small ribosomal subunit protein uS15 (RPS13) (Cricetulus griseus (Chinese hamster)).